The primary structure comprises 540 residues: Extracellular matrix protein 1 (540 aa).

The first 19 residues, 1–19, serve as a signal peptide directing secretion; sequence MGTTARAALVLTYLAVASA. Disordered regions lie at residues 41–85 and 120–175; these read VGYA…EATP and LQHP…PSPD. Composition is skewed to polar residues over residues 71–85 and 146–156; these read GQSQVQPPPSQEATP and NAAQHCQQDRS. 2 repeat units span residues 150 to 279 and 283 to 405. Residues 150–405 are 2 X approximate repeats; the sequence is HCQQDRSQGG…FARRAPYPNY (256 aa). An N-linked (GlcNAc...) asparagine glycan is attached at Asn354. Residue Asn444 is glycosylated (N-linked (GlcNAc...) (complex) asparagine). Positions 515–540 are disordered; that stretch reads ENAKGQGEQGSTGGTNISSTSEPKEE. Residues 528–540 show a composition bias toward low complexity; that stretch reads GTNISSTSEPKEE. An N-linked (GlcNAc...) asparagine glycan is attached at Asn530.

As to quaternary structure, interacts (via C-terminus) with HSPG2 (via C-terminus). Interacts with EFEMP1/FBLN3 and LAMB3. Interacts with MMP9. In terms of tissue distribution, expressed in breast cancer tissues. Little or no expression observed in normal breast tissues. Expressed in skin; wide expression is observed throughout the dermis with minimal expression in the epidermis.

The protein localises to the secreted. Its subcellular location is the extracellular space. It is found in the extracellular matrix. Its function is as follows. Involved in endochondral bone formation as negative regulator of bone mineralization. Stimulates the proliferation of endothelial cells and promotes angiogenesis. Inhibits MMP9 proteolytic activity. The sequence is that of Extracellular matrix protein 1 (ECM1) from Homo sapiens (Human).